The following is a 217-amino-acid chain: Growth factor receptor-bound protein 2 (217 aa).

Methionine 1 carries the N-acetylmethionine modification. One can recognise an SH3 1 domain in the interval methionine 1–histidine 58. Residues lysine 6, lysine 50, and lysine 109 each carry the N6-acetyllysine modification. The 93-residue stretch at tryptophan 60 to glutamate 152 folds into the SH2 domain. Lysine 109 participates in a covalent cross-link: Glycyl lysine isopeptide (Lys-Gly) (interchain with G-Cter in ubiquitin). Positions glutamine 156–arginine 215 constitute an SH3 2 domain. Position 209 is a phosphotyrosine (tyrosine 209). Threonine 211 carries the post-translational modification Phosphothreonine.

The protein belongs to the GRB2/sem-5/DRK family. In terms of assembly, associates (via SH2 domain) with activated EGF and PDGF receptors (tyrosine phosphorylated). Interacts with PDGFRA (tyrosine phosphorylated); the interaction may be indirect. Interacts with IRS4 (when Tyr-phosphorylated). Also associates to other cellular Tyr-phosphorylated proteins such as SIT1, IRS1, IRS2, SHC and LNK; probably via the concerted action of both its SH2 and SH3 domains. It also seems to interact with RAS in the signaling pathway leading to DNA synthesis. Interacts with SOS1. Forms a complex with MUC1 and SOS1, through interaction of the SH3 domains with SOS1 and the SH2 domain with phosphorylated MUC1. Interacts with phosphorylated MET. Interacts with phosphorylated TOM1L1. Interacts with the phosphorylated C-terminus of SH2B2. Interacts with phosphorylated SIT1, LAX1, LAT, LAT2 and LIME1 upon TCR and/or BCR activation. Interacts with NISCH, PTPNS1 and REPS2. Interacts with syntrophin SNTA1. Interacts (via SH3 domains) with REPS1. Interacts (via SH3 domains) with PIK3C2B. Interacts with CBL and CBLB. Interacts with AJUBA and CLNK. Interacts (via SH2 domain) with TEK/TIE2 (tyrosine phosphorylated). Interacts with SHB, INPP5D/SHIP1, SKAP1 and SKAP2. Interacts with PTPN11. Interacts with PRNP. Interacts with RALGPS1. Also interacts with HCST. Interacts with KDR. Interacts with FLT1 (tyrosine-phosphorylated). Interacts with GAPT and PTPRE. Interacts (via SH2 domain) with KIF26A. Interacts (via SH3 2) with GAB2. Interacts with ADAM15. Interacts with THEMIS2. Interacts (via SH2 domain) with AXL (phosphorylated). Interacts (via SH2 domain) with KIT (phosphorylated). Interacts with PTPRJ and BCR. Interacts with PTPN23. Interacts with FLT4 (tyrosine phosphorylated). Interacts with EPHB1 and SHC1; activates the MAPK/ERK cascade to regulate cell migration. Part of a complex including TNK2, GRB2 and one receptor tyrosine kinase (RTK) such as AXL and PDGFRL, in which GRB2 promotes RTK recruitment by TNK2. Interacts (via SH2 domain) with CSF1R (tyrosine phosphorylated). Interacts with ERBB4. Interacts with NTRK1 (phosphorylated upon ligand-binding). Interacts with PTK2/FAK1 (tyrosine phosphorylated). Interacts with PTK2B/PYK2 (tyrosine phosphorylated). Interacts (via SH2-domain) with SCIMP; this interaction is dependent on phosphorylation of SCIMP 'Tyr-58'. Interacts (via SH3 domains) with GAREM1 (via proline-rich domain and tyrosine phosphorylated); the interaction occurs upon EGF stimulation. Interacts with DAB2. Interacts with TESPA1. Interacts with THEMIS. Interacts with PLCG1, LAT and THEMIS upon TCR activation in thymocytes; the association is weaker in the absence of TESPA1. Interacts with CD28. Interacts with RAB13; may recruit RAB13 to the leading edge of migrating endothelial cells where it can activate RHOA. Interacts with ASAP3 (phosphorylated form). Interacts (via SH2 domain) with PTPRH (phosphorylated form). Interacts with PTPRO (phosphorylated form). Interacts with PTPRB (phosphorylated form). Interacts (via SH3 domain 2) with PRR14 (via proline-rich region). Interacts with DENND2B. Interacts with SPRY2. Interacts with LRRC8A. Interacts with PEAK1. Interacts with FCRL1. Interacts with PCNA. Interacts with CD19. Interacts with BECN1. Interacts with RAD51; the interaction inhibits RAD51 ATPase to stabilize RAD51-DNA complex at stalled replication forks. Interacts with MRE11; this interaction recruits MRE11 to the DNA damage sites. Interacts with RIPK1 ans SQSTM1; these interactions play a critical role in regulating programmed necrosis. Interacts with AGO2; this interaction is important for the formation of a ternary complex containing GRB2, AGO2 and DICER1. Interacts with TIGIT; this interaction inhibits PI3K and MAPK signaling cascades. Interacts with CD226; this interaction leads to activation of VAV1, PI3K and PLCG1. As to quaternary structure, interacts with SOS1; this interaction competes with GRB2 to bind SOS1 via its N-terminal SH3 domain. In terms of processing, phosphorylation of Tyr-209 in the C-terminal SH3 domain reduces its binding to SOS1. Ubiquitinated by RNF173, leading to proteasomal degradation and inhibition of the RAF/MEK/ERK pathway. In the nucleus, polyubiquitinated by RBBP6 at Lys-109 at DNA damage sites. In terms of tissue distribution, expressed in macrophages.

Its subcellular location is the nucleus. It is found in the cytoplasm. The protein localises to the endosome. The protein resides in the golgi apparatus. Non-enzymatic adapter protein that plays a pivotal role in precisely regulated signaling cascades from cell surface receptors to cellular responses, including signaling transduction and gene expression. Thus, participates in many biological processes including regulation of innate and adaptive immunity, autophagy, DNA repair or necroptosis. Controls signaling complexes at the T-cell antigen receptor to facilitate the activation, differentiation, and function of T-cells. Mechanistically, engagement of the TCR leads to phosphorylation of the adapter protein LAT, which serves as docking site for GRB2. In turn, GRB2 establishes a a connection with SOS1 that acts as a guanine nucleotide exchange factor and serves as a critical regulator of KRAS/RAF1 leading to MAPKs translocation to the nucleus and activation. Also functions a role in B-cell activation by amplifying Ca(2+) mobilization and activation of the ERK MAP kinase pathway upon recruitment to the phosphorylated B-cell antigen receptor (BCR). Plays a role in switching between autophagy and programmed necrosis upstream of EGFR by interacting with components of necrosomes including RIPK1 and with autophagy regulators SQSTM1 and BECN1. Regulates miRNA biogenesis by forming a functional ternary complex with AGO2 and DICER1. Functions in the replication stress response by protecting DNA at stalled replication forks from MRE11-mediated degradation. Mechanistically, inhibits RAD51 ATPase activity to stabilize RAD51 on stalled replication forks. Additionally, directly recruits and later releases MRE11 at DNA damage sites during the homology-directed repair (HDR) process. In terms of biological role, does not bind to phosphorylated epidermal growth factor receptor (EGFR) but inhibits EGF-induced transactivation of a RAS-responsive element. Acts as a dominant negative protein over GRB2 and by suppressing proliferative signals, may trigger active programmed cell death. Mechanistically, inhibits RAS-ERK signaling and downstream cell proliferation by competing with GRB2 for SOS1 binding and thus by regulating SOS1 membrane recruitment. This is Growth factor receptor-bound protein 2 (Grb2) from Mus musculus (Mouse).